The chain runs to 492 residues: GTPase Der (492 aa).

EngA-type G domains follow at residues 3 to 167 and 201 to 381; these read FTLA…DAYA and LQVA…EVWN. GTP contacts are provided by residues 9–16, 56–60, 119–122, 207–214, 259–263, and 324–327; these read GRPNVGKS, DTAGL, NKAE, GRPNAGKS, DTAGM, and NKWD. Residues 382-468 enclose the KH-like domain; it reads RRVTTAQLNR…RLWMRGQNDA (87 aa). A disordered region spans residues 462–492; the sequence is MRGQNDANPYKGRKKAPPSKLRKHTDGRRKD. Positions 472–492 are enriched in basic residues; the sequence is KGRKKAPPSKLRKHTDGRRKD.

It belongs to the TRAFAC class TrmE-Era-EngA-EngB-Septin-like GTPase superfamily. EngA (Der) GTPase family. As to quaternary structure, associates with the 50S ribosomal subunit.

GTPase that plays an essential role in the late steps of ribosome biogenesis. In Roseobacter denitrificans (strain ATCC 33942 / OCh 114) (Erythrobacter sp. (strain OCh 114)), this protein is GTPase Der.